The sequence spans 69 residues: Putative membrane protein insertion efficiency factor (69 aa).

It belongs to the UPF0161 family.

It localises to the cell membrane. In terms of biological role, could be involved in insertion of integral membrane proteins into the membrane. The protein is Putative membrane protein insertion efficiency factor of Thermoanaerobacter pseudethanolicus (strain ATCC 33223 / 39E) (Clostridium thermohydrosulfuricum).